The chain runs to 86 residues: UPF0125 protein bbp_234 (86 aa).

The protein belongs to the UPF0125 (RnfH) family.

The sequence is that of UPF0125 protein bbp_234 from Buchnera aphidicola subsp. Baizongia pistaciae (strain Bp).